Here is a 465-residue protein sequence, read N- to C-terminus: Solute carrier family 7 member 12 (465 aa).

The Cytoplasmic segment spans residues 1–6 (MQLLRA). The helical transmembrane segment at 7–27 (LGVFHVSMILFSATLGTGIFV) threads the bilayer. The Extracellular portion of the chain corresponds to 28-39 (TPKAVLKYSSLN). The helical transmembrane segment at 40–60 (IPVSLSIWAGCGLLSIMSALC) threads the bilayer. The Cytoplasmic portion of the chain corresponds to 61-81 (NAEIATTYPLSGASYYFLKRT). A helical membrane pass occupies residues 82–102 (LGSSVAFLSLWIKLFAHFLGI). Topologically, residues 103–132 (GAQCLLIATSVIQCFYSGCPAPELPTKCLA) are extracellular. A helical transmembrane segment spans residues 133–153 (LAILWSFGIVSARGIKTVAWF). A topological domain (cytoplasmic) is located at residue Asn-154. The helical transmembrane segment at 155–175 (TVSSFIKLSVLCLISLTVLLV) threads the bilayer. The Extracellular portion of the chain corresponds to 176 to 202 (NGKKENVSRFENALDAELPNASQIADA). A helical membrane pass occupies residues 203–223 (ILQVSYSYLGSSVLIVIAGEI). The Cytoplasmic portion of the chain corresponds to 224 to 234 (KRPTETIPKTL). The helical transmembrane segment at 235-255 (IYGISIVTVLYLLTNISYLAV) threads the bilayer. The Extracellular segment spans residues 256–280 (LTSQEIIFSDSVGVTWMNRVFPSIQ). The helical transmembrane segment at 281 to 301 (WISSFLISAFLLGSVSCGIVS) threads the bilayer. At 302 to 327 (ASRVFYSASQEGEFPSIYSMLNDHHS) the chain is on the cytoplasmic side. The helical transmembrane segment at 328-351 (PAVADIQIVILSSVAIISSSIIYL) threads the bilayer. Topologically, residues 352-356 (VKYVS) are extracellular. The helical transmembrane segment at 357–375 (LGSFCINLLQMIGLLKIRY) threads the bilayer. The Cytoplasmic segment spans residues 376 to 386 (QNPDIPRPYKV). A helical membrane pass occupies residues 387 to 407 (WLPFIFGSIALSLFLIFTPVI). The Extracellular segment spans residues 408–409 (QS). The chain crosses the membrane as a helical span at residues 410-430 (PSIEHVYQVVFLFCGFLCYWL). The Cytoplasmic segment spans residues 431-465 (QANLNGHATCFDTITCYCQLLFNISPSEDPEEQKN).

The protein belongs to the amino acid-polyamine-organocation (APC) superfamily. As to quaternary structure, probably forms multimers, perhaps with an unknown protein(s). As to expression, expressed in kidney and red blood cells (at protein level). Expressed in kidney along the collecting ducts in the cortex, outer and inner medulla. May be expressed in placenta, lungs, spleen and skeletal muscles.

The protein localises to the apical cell membrane. It is found in the basal cell membrane. It localises to the cytoplasm. In terms of biological role, probably mediates sodium- and chloride-independent uptake of neutral amino acids. This is Solute carrier family 7 member 12 from Mus musculus (Mouse).